Reading from the N-terminus, the 1065-residue chain is MEIFILPEFGKIQFEGFNRFINQGLSEELSNFPIIEDIDQEFEFQIFGEQYKLAEPLLKERDAVYQSITYSSDVYVPAQLTQKKKGKIQKQIVFLGSIPLMNSQGTFVVNGVARVIINQILRSPGIYYNSELDHNGIPIYTGTLISNWGGRLKLEIDGKTRIWARISKKRKVSILVLLLAMGLNLQNILDSVCYPKIFLEFIKKNTKKEYPNSTEDAIVELYKHLYCIGGDLFFSESIRKELQKKFFQQRCELGKIGRLNLNKKLNLNVPENEIFVLPQDILAAVDYLIKLKFGIGTIDDIDHLKNRRVCSVADLLQDQLKLALNRLENSVLFFFRGATKRKRLPTPKSLVTSTPLIMTFKEFFGSHPLSQFLDQTNPLTEIVHKRRLSSLGPGGLTRRTASFQVRDIHASHYGRICPIETSEGMNAGLIASLAIHAKISILGCLESPFYKISKLSNLEEIINLSAAEDEYYRIATGNCLALDQNSQEEQITPARYRQDFVAIAWEQVHLRSIFPLQYFSVGASLIPFLEHNDANRALMGSNMQRQAVPLLKPEKCIVGTGIESQTALDSGSVTVSSHGGKIEYLDGNQIILSLKKKKIDKNLIIYQRSNNSTCMHQKPKVEKQKYIKKGQILADGAATANGELALGKNILVAYMPWEGYNFEDAILINERLIYEDIYTSIHIERYEIEARVTSQGPEKFTNEIPHLDDYLLRHLDQNGIVLTGSWVETGDVLVGKLTPQETEENLRAPEGKLLQAIFGIQVATSKETCLKVPPGGRGRVIDIRLISQEDNSANTAQIIHIYILQKRKIQIGDKVAGRHGNKGIISKILPRQDMPFLQDGTPIDMILSPLGVPSRMNVGQIFECLLGLAGSFLHKNYRIIPFDERYEREASRKLVFSELYKASKKTTNPWLFEPDNPGKNRLIDGRTGEIFEQPITIGKAYMLKLIHQVDDKIHARSSGPYALVTQQPLRGRSRRGGQRVGEMEVWALEGFGVAYILQEMLTIKSDHIRARYEVLGAIVTGEPIPKPNTAPESFKLLVRELRSLALEINHVIICEKNLKLKLKEI.

The protein belongs to the RNA polymerase beta chain family. In terms of assembly, in plastids the minimal PEP RNA polymerase catalytic core is composed of four subunits: alpha, beta, beta', and beta''. When a (nuclear-encoded) sigma factor is associated with the core the holoenzyme is formed, which can initiate transcription.

The protein localises to the plastid. It localises to the chloroplast. It catalyses the reaction RNA(n) + a ribonucleoside 5'-triphosphate = RNA(n+1) + diphosphate. Functionally, DNA-dependent RNA polymerase catalyzes the transcription of DNA into RNA using the four ribonucleoside triphosphates as substrates. This chain is DNA-directed RNA polymerase subunit beta, found in Marchantia polymorpha (Common liverwort).